A 445-amino-acid polypeptide reads, in one-letter code: Tubulin beta-9 chain (445 aa).

Positions 11, 69, 138, 142, 143, 144, 204, and 226 each coordinate GTP. Position 69 (E69) interacts with Mg(2+). Positions 423 to 445 (QQYQDATADDEEYEEEEEYEAEA) are disordered. A compositionally biased stretch (acidic residues) spans 429–445 (TADDEEYEEEEEYEAEA).

The protein belongs to the tubulin family. Dimer of alpha and beta chains. A typical microtubule is a hollow water-filled tube with an outer diameter of 25 nm and an inner diameter of 15 nM. Alpha-beta heterodimers associate head-to-tail to form protofilaments running lengthwise along the microtubule wall with the beta-tubulin subunit facing the microtubule plus end conferring a structural polarity. Microtubules usually have 13 protofilaments but different protofilament numbers can be found in some organisms and specialized cells. The cofactor is Mg(2+).

The protein localises to the cytoplasm. It localises to the cytoskeleton. Tubulin is the major constituent of microtubules, a cylinder consisting of laterally associated linear protofilaments composed of alpha- and beta-tubulin heterodimers. Microtubules grow by the addition of GTP-tubulin dimers to the microtubule end, where a stabilizing cap forms. Below the cap, tubulin dimers are in GDP-bound state, owing to GTPase activity of alpha-tubulin. The sequence is that of Tubulin beta-9 chain from Gossypium hirsutum (Upland cotton).